The primary structure comprises 133 residues: Holo-[acyl-carrier-protein] synthase (133 aa).

Positions 8 and 58 each coordinate Mg(2+).

The protein belongs to the P-Pant transferase superfamily. AcpS family. Mg(2+) is required as a cofactor.

The protein resides in the cytoplasm. It carries out the reaction apo-[ACP] + CoA = holo-[ACP] + adenosine 3',5'-bisphosphate + H(+). Transfers the 4'-phosphopantetheine moiety from coenzyme A to a Ser of acyl-carrier-protein. The sequence is that of Holo-[acyl-carrier-protein] synthase from Sphingopyxis alaskensis (strain DSM 13593 / LMG 18877 / RB2256) (Sphingomonas alaskensis).